We begin with the raw amino-acid sequence, 681 residues long: MGKLPMKEAALVYLDRSGGLQKFMDDCKYYNDSKQSYAVYRFSILINPCDVVELDAELGNHILHHPLKAAQVFQSVCFVAVKTLSLIGKLQTETQINIVLKLTHLPSLPSYSLDLCEFPLNYASQRFYMMQGIVIAMTTVTKYTQGARFLCSDEVCPFSKGFQYIRVHVPGATESATVRNDFLCRLCSSSLQEDRKFRVLGDKQIIEIITTKVLHAFQGDPKNQPFRFQSLSVFLRDELVNKMKIGNEYKIIGIPVCVKTSQTALCVEANSITPYTAKVPSGISDNFRCLLSLTSSSCWRFTAILANVFASHIVPLGTYNLLKLCLLMSLVQTRDCSSERENCLDILVITSDTLLVDRLLNFSMNLVSRGIRHPVCTEVFPTVSRDKYGTGAVSIQAGSALLARGGVCFIGDLTSHKKDKLEQLQSALESRSVTVFIPGKKFGDDFDQQMTFPIQCSFWSFVDMDSSSRRNVQKASTLIGQMDCSLIPANLAEAFGLLVNCKESSPCHPLLPTVQHTLKKAVDPKGPPYLASKQFTTEDFEKLLAFAKNLNVEFSLEAERMIHGYYLASRRIRTDSIHGSKLSANALKYLVSLSEAHARLNLRNKVLREDVLIAALLFEISLTLKYGATAFCVAPNALFPFELYDEDYLEQRDLYLTQCQQQLQHFIATCGPGTAVLSSDE.

S292 carries the phosphoserine modification. The MCM domain occupies 533–621 (KQFTTEDFEK…LIAALLFEIS (89 aa)).

In terms of biological role, plays an important role in meiotic recombination and associated DNA double-strand break repair. This chain is Minichromosome maintenance domain-containing protein 2 (Mcmdc2), found in Rattus norvegicus (Rat).